We begin with the raw amino-acid sequence, 115 residues long: MNLVMALLTNTALASLLVLIAFWLPQLNSYAEKTSPYECGFDPMGSARLPFSMKFFLVAITFLLFDLEVALLLPLPWATQTTNLKTMLIMALTLISLLAISLAYEWTQKGLEWTE.

3 consecutive transmembrane segments (helical) span residues leucine 3 to tryptophan 23, phenylalanine 55 to leucine 75, and threonine 86 to tryptophan 106.

It belongs to the complex I subunit 3 family. Core subunit of respiratory chain NADH dehydrogenase (Complex I) which is composed of 45 different subunits. Interacts with TMEM186. Interacts with TMEM242.

It localises to the mitochondrion inner membrane. It catalyses the reaction a ubiquinone + NADH + 5 H(+)(in) = a ubiquinol + NAD(+) + 4 H(+)(out). Functionally, core subunit of the mitochondrial membrane respiratory chain NADH dehydrogenase (Complex I) which catalyzes electron transfer from NADH through the respiratory chain, using ubiquinone as an electron acceptor. Essential for the catalytic activity of complex I. In Hippopotamus amphibius (Hippopotamus), this protein is NADH-ubiquinone oxidoreductase chain 3.